Reading from the N-terminus, the 83-residue chain is Small ribosomal subunit protein eS21 (83 aa).

Position 1 is an N-acetylmethionine (methionine 1). Lysine 81 carries the N6-acetyllysine modification.

It belongs to the eukaryotic ribosomal protein eS21 family. As to quaternary structure, component of the 40S small ribosomal subunit.

It localises to the cytoplasm. Its subcellular location is the cytosol. It is found in the rough endoplasmic reticulum. In terms of biological role, component of the small ribosomal subunit. The ribosome is a large ribonucleoprotein complex responsible for the synthesis of proteins in the cell. This is Small ribosomal subunit protein eS21 (Rps21) from Mus musculus (Mouse).